We begin with the raw amino-acid sequence, 214 residues long: Probable transaldolase (214 aa).

The active-site Schiff-base intermediate with substrate is the K83.

It belongs to the transaldolase family. Type 3B subfamily.

The protein localises to the cytoplasm. It carries out the reaction D-sedoheptulose 7-phosphate + D-glyceraldehyde 3-phosphate = D-erythrose 4-phosphate + beta-D-fructose 6-phosphate. Its pathway is carbohydrate degradation; pentose phosphate pathway; D-glyceraldehyde 3-phosphate and beta-D-fructose 6-phosphate from D-ribose 5-phosphate and D-xylulose 5-phosphate (non-oxidative stage): step 2/3. Functionally, transaldolase is important for the balance of metabolites in the pentose-phosphate pathway. This chain is Probable transaldolase, found in Alkaliphilus metalliredigens (strain QYMF).